Consider the following 198-residue polypeptide: NADH-quinone oxidoreductase subunit C (198 aa).

This sequence belongs to the complex I 30 kDa subunit family. NDH-1 is composed of 14 different subunits. Subunits NuoB, C, D, E, F, and G constitute the peripheral sector of the complex.

It is found in the cell inner membrane. The catalysed reaction is a quinone + NADH + 5 H(+)(in) = a quinol + NAD(+) + 4 H(+)(out). Its function is as follows. NDH-1 shuttles electrons from NADH, via FMN and iron-sulfur (Fe-S) centers, to quinones in the respiratory chain. The immediate electron acceptor for the enzyme in this species is believed to be ubiquinone. Couples the redox reaction to proton translocation (for every two electrons transferred, four hydrogen ions are translocated across the cytoplasmic membrane), and thus conserves the redox energy in a proton gradient. The chain is NADH-quinone oxidoreductase subunit C from Chromobacterium violaceum (strain ATCC 12472 / DSM 30191 / JCM 1249 / CCUG 213 / NBRC 12614 / NCIMB 9131 / NCTC 9757 / MK).